The primary structure comprises 163 residues: ATP synthase subunit b 1 (163 aa).

The chain crosses the membrane as a helical span at residues 5 to 25 (FDATFFAFVGLVLFLALVVYL).

This sequence belongs to the ATPase B chain family. As to quaternary structure, F-type ATPases have 2 components, F(1) - the catalytic core - and F(0) - the membrane proton channel. F(1) has five subunits: alpha(3), beta(3), gamma(1), delta(1), epsilon(1). F(0) has three main subunits: a(1), b(2) and c(10-14). The alpha and beta chains form an alternating ring which encloses part of the gamma chain. F(1) is attached to F(0) by a central stalk formed by the gamma and epsilon chains, while a peripheral stalk is formed by the delta and b chains.

It localises to the cell inner membrane. Functionally, f(1)F(0) ATP synthase produces ATP from ADP in the presence of a proton or sodium gradient. F-type ATPases consist of two structural domains, F(1) containing the extramembraneous catalytic core and F(0) containing the membrane proton channel, linked together by a central stalk and a peripheral stalk. During catalysis, ATP synthesis in the catalytic domain of F(1) is coupled via a rotary mechanism of the central stalk subunits to proton translocation. Its function is as follows. Component of the F(0) channel, it forms part of the peripheral stalk, linking F(1) to F(0). This is ATP synthase subunit b 1 from Rhizobium leguminosarum bv. trifolii (strain WSM2304).